A 185-amino-acid chain; its full sequence is ATP synthase subunit b, chloroplastic (185 aa).

A helical membrane pass occupies residues 7–29 (SFVYLVGHCPFAGSFAFNTDILA).

This sequence belongs to the ATPase B chain family. As to quaternary structure, F-type ATPases have 2 components, F(1) - the catalytic core - and F(0) - the membrane proton channel. F(1) has five subunits: alpha(3), beta(3), gamma(1), delta(1), epsilon(1). F(0) has four main subunits: a(1), b(1), b'(1) and c(10-14). The alpha and beta chains form an alternating ring which encloses part of the gamma chain. F(1) is attached to F(0) by a central stalk formed by the gamma and epsilon chains, while a peripheral stalk is formed by the delta, b and b' chains.

The protein resides in the plastid. It localises to the chloroplast thylakoid membrane. Functionally, f(1)F(0) ATP synthase produces ATP from ADP in the presence of a proton or sodium gradient. F-type ATPases consist of two structural domains, F(1) containing the extramembraneous catalytic core and F(0) containing the membrane proton channel, linked together by a central stalk and a peripheral stalk. During catalysis, ATP synthesis in the catalytic domain of F(1) is coupled via a rotary mechanism of the central stalk subunits to proton translocation. Its function is as follows. Component of the F(0) channel, it forms part of the peripheral stalk, linking F(1) to F(0). The chain is ATP synthase subunit b, chloroplastic from Dioscorea elephantipes (Elephant's foot yam).